Reading from the N-terminus, the 425-residue chain is Glutamyl-tRNA reductase (425 aa).

Substrate contacts are provided by residues 49–52 (TCNR), S107, 112–114 (EPQ), and Q118. Catalysis depends on C50, which acts as the Nucleophile. 187-192 (GAGETI) is an NADP(+) binding site.

This sequence belongs to the glutamyl-tRNA reductase family. As to quaternary structure, homodimer.

It carries out the reaction (S)-4-amino-5-oxopentanoate + tRNA(Glu) + NADP(+) = L-glutamyl-tRNA(Glu) + NADPH + H(+). It functions in the pathway porphyrin-containing compound metabolism; protoporphyrin-IX biosynthesis; 5-aminolevulinate from L-glutamyl-tRNA(Glu): step 1/2. Catalyzes the NADPH-dependent reduction of glutamyl-tRNA(Glu) to glutamate 1-semialdehyde (GSA). The sequence is that of Glutamyl-tRNA reductase from Pseudomonas putida (strain W619).